Consider the following 278-residue polypeptide: Orotidine 5'-phosphate decarboxylase (278 aa).

Lys95 functions as the Proton donor in the catalytic mechanism.

The protein belongs to the OMP decarboxylase family. Type 2 subfamily.

The catalysed reaction is orotidine 5'-phosphate + H(+) = UMP + CO2. The protein operates within pyrimidine metabolism; UMP biosynthesis via de novo pathway; UMP from orotate: step 2/2. The protein is Orotidine 5'-phosphate decarboxylase of Corynebacterium glutamicum (strain R).